Here is a 685-residue protein sequence, read N- to C-terminus: Glycine--tRNA ligase beta subunit (685 aa).

The disordered stretch occupies residues 58–77 (GLTAQSPTTREERKGPRTDA). Positions 66-77 (TREERKGPRTDA) are enriched in basic and acidic residues.

Belongs to the class-II aminoacyl-tRNA synthetase family. Tetramer of two alpha and two beta subunits.

The protein localises to the cytoplasm. The catalysed reaction is tRNA(Gly) + glycine + ATP = glycyl-tRNA(Gly) + AMP + diphosphate. The sequence is that of Glycine--tRNA ligase beta subunit from Paracoccus denitrificans (strain Pd 1222).